The primary structure comprises 333 residues: Na(+)-translocating ferredoxin:NAD(+) oxidoreductase complex subunit B (333 aa).

The tract at residues 1–27 is hydrophobic; sequence MLNAILVPVGILGVFGLIFGIGLAIAA. The 4Fe-4S domain occupies 33–92; the sequence is YEDPRVPLVRAALPGANCGGCGLPGCDALAANIVGGSAAIDACPVGGASCAAAVAEIMGM. Positions 50, 53, 58, 75, 138, 142, 148, 152, 172, 175, 178, 182, 217, 220, 223, 227, 246, 249, 252, 256, 279, 282, 285, 289, 310, 313, 316, and 320 each coordinate [4Fe-4S] cluster. 6 consecutive 4Fe-4S ferredoxin-type domains span residues 126–162, 163–192, 207–237, 239–266, 270–299, and 301–330; these read REAM…IGED, GLPK…LVPE, KIAR…VENN, AKID…GDVE, STAY…GEIK, and PPYV…MRPN.

It belongs to the 4Fe4S bacterial-type ferredoxin family. RnfB subfamily. In terms of assembly, the complex is composed of six subunits: RnfA, RnfB, RnfC, RnfD, RnfE and RnfG. [4Fe-4S] cluster is required as a cofactor.

It localises to the cell membrane. It carries out the reaction 2 reduced [2Fe-2S]-[ferredoxin] + Na(+)(in) + NAD(+) + H(+) = 2 oxidized [2Fe-2S]-[ferredoxin] + Na(+)(out) + NADH. Its function is as follows. Part of a membrane-bound complex that couples electron transfer with translocation of ions across the membrane. Couples electron transfer from reduced ferredoxin to NAD(+) with electrogenic movement of Na(+) out of the cell. Involved in caffeate respiration. The protein is Na(+)-translocating ferredoxin:NAD(+) oxidoreductase complex subunit B of Acetobacterium woodii (strain ATCC 29683 / DSM 1030 / JCM 2381 / KCTC 1655 / WB1).